The chain runs to 455 residues: GTPase Der (455 aa).

EngA-type G domains are found at residues 3 to 167 and 184 to 359; these read FTIA…PEPA and IRVA…AVWN. GTP is bound by residues 9-16, 56-60, 119-122, 190-197, 237-241, and 302-305; these read GRPNVGKS, DTAGL, NKSE, GRPNAGKS, and NKWD. One can recognise a KH-like domain in the interval 360 to 444; the sequence is RRVATALLNR…PIRITLREKA (85 aa).

This sequence belongs to the TRAFAC class TrmE-Era-EngA-EngB-Septin-like GTPase superfamily. EngA (Der) GTPase family. Associates with the 50S ribosomal subunit.

GTPase that plays an essential role in the late steps of ribosome biogenesis. This Nitrobacter winogradskyi (strain ATCC 25391 / DSM 10237 / CIP 104748 / NCIMB 11846 / Nb-255) protein is GTPase Der.